The primary structure comprises 753 residues: Synaptotagmin-like protein 5 (753 aa).

The RabBD domain occupies 7-123 (FINLSFLLDH…IISGEWFLEE (117 aa)). The segment at 64 to 106 (CVHCHKTLGLIFDRGDPCQACSLRVCSECRVTGLDGSWKCTVC) adopts an FYVE-type zinc-finger fold. Disordered stretches follow at residues 145 to 279 (RRSP…SREH), 297 to 359 (LTKS…LNSL), and 380 to 404 (LASG…VPDA). Ser-147 carries the phosphoserine modification. Over residues 150 to 174 (SEETQNQEQAQQCVDKSDTLSSVRQ) the composition is skewed to polar residues. Residues 195 to 206 (TRGEIRTPKPES) show a composition bias toward basic and acidic residues. Residues 214-223 (LDSQNLQSFK) show a composition bias toward polar residues. Low complexity predominate over residues 224–237 (SASGSDRGSTTSSD). Residues 249 to 275 (KSSYSNGGIPVTQRSPVPSAHSVTSIN) show a composition bias toward polar residues. The span at 380 to 391 (LASGLSTNSQAG) shows a compositional bias: polar residues. C2 domains are found at residues 429–550 (VTGE…DEWF) and 597–717 (KRGK…VDWM).

Binds RAB27A that has been activated by GTP-binding.

The protein localises to the membrane. In terms of biological role, may act as Rab effector protein and play a role in vesicle trafficking. Binds phospholipids. The sequence is that of Synaptotagmin-like protein 5 (Sytl5) from Mus musculus (Mouse).